The sequence spans 147 residues: MPTPSMEDYIEIIYNLIESKGYARVSAIAEALDVHPSSVTKMVQKLDKDQYLDYEKYRGFVLTSKGKKIGERLVFRHELLEEFLEIIGVNDENIYDDVEGIEHHLSWNSIDRIGDLVNYFKDDDSRVKDLKKVIKESDQQVNETAEK.

In terms of domain architecture, HTH dtxR-type spans 1–63 (MPTPSMEDYI…YEKYRGFVLT (63 aa)). Positions 8, 11, 77, 99, 102, and 103 each coordinate Mn(2+).

This sequence belongs to the DtxR/MntR family. As to quaternary structure, homodimer.

It localises to the cytoplasm. Its activity is regulated as follows. DNA binding is strongly activated by Mn(2+). Its function is as follows. Central regulator of manganese homeostasis. The chain is HTH-type transcriptional regulator MntR from Oceanobacillus iheyensis (strain DSM 14371 / CIP 107618 / JCM 11309 / KCTC 3954 / HTE831).